We begin with the raw amino-acid sequence, 472 residues long: Glutamate--tRNA ligase (472 aa).

A 'HIGH' region motif is present at residues 9-19 (PSPTGYLHVGG). Residues Cys-98, Cys-100, Cys-125, and His-127 each contribute to the Zn(2+) site. Positions 237 to 241 (KLSKR) match the 'KMSKS' region motif. Lys-240 serves as a coordination point for ATP.

Belongs to the class-I aminoacyl-tRNA synthetase family. Glutamate--tRNA ligase type 1 subfamily. Monomer. Zn(2+) serves as cofactor.

Its subcellular location is the cytoplasm. It carries out the reaction tRNA(Glu) + L-glutamate + ATP = L-glutamyl-tRNA(Glu) + AMP + diphosphate. Catalyzes the attachment of glutamate to tRNA(Glu) in a two-step reaction: glutamate is first activated by ATP to form Glu-AMP and then transferred to the acceptor end of tRNA(Glu). In Klebsiella pneumoniae (strain 342), this protein is Glutamate--tRNA ligase.